Reading from the N-terminus, the 388-residue chain is Na(+)/H(+) antiporter NhaA (388 aa).

The Cytoplasmic segment spans residues 1-11 (MKHLHRFFSSD). A helical membrane pass occupies residues 12–31 (ASGGIILIIAAILAMMMANS). At 32–58 (GATSGWYHDFLETPVQLRVGSLEINKN) the chain is on the periplasmic side. A helical transmembrane segment spans residues 59–80 (MLLWINDALMAVFFLLVGLEVK). The Cytoplasmic portion of the chain corresponds to 81–96 (RELMQGSLASLRQAAF). A helical membrane pass occupies residues 97–116 (PVIAAIGGMIVPALLYLAFN). At 117 to 122 (YADPIT) the chain is on the periplasmic side. A helical transmembrane segment spans residues 123 to 130 (REGWAIPA). At 131–154 (ATDIAFALGVLALLGSRVPLALKI) the chain is on the cytoplasmic side. A helical transmembrane segment spans residues 155–176 (FLMALAIIDDLGAIIIIALFYT). The Periplasmic segment spans residues 177-180 (NDLS). Residues 181 to 200 (MASLGVAAVAIAVLAVLNLC) traverse the membrane as a helical segment. The Cytoplasmic segment spans residues 201-204 (GVRR). The chain crosses the membrane as a helical span at residues 205–222 (TGVYILVGVVLWTAVLKS). Gly223 is a topological domain (periplasmic). A helical transmembrane segment spans residues 224–236 (VHATLAGVIVGFF). Residues 237–253 (IPLKEKHGRSTAKRLEH) are Cytoplasmic-facing. Residues 254-272 (VLHPWVAYLILPLFAFANA) traverse the membrane as a helical segment. Topologically, residues 273–286 (GVSLQGVTLDGLTS) are periplasmic. A helical membrane pass occupies residues 287 to 310 (ILPLGIIAGLLIGKPLGISLFCWL). The Cytoplasmic portion of the chain corresponds to 311–339 (ALRLKLAHLPEGTTYQQIMAVGILCGIGF). A helical membrane pass occupies residues 340–350 (TMSIFIASLAF). At 351 to 357 (GSVDPEL) the chain is on the periplasmic side. Residues 358 to 380 (INWAKLGILVGSISSAVIGYSWL) form a helical membrane-spanning segment. At 381 to 388 (RVRLRPSV) the chain is on the cytoplasmic side.

This sequence belongs to the NhaA Na(+)/H(+) (TC 2.A.33) antiporter family.

It is found in the cell inner membrane. It catalyses the reaction Na(+)(in) + 2 H(+)(out) = Na(+)(out) + 2 H(+)(in). In terms of biological role, na(+)/H(+) antiporter that extrudes sodium in exchange for external protons. The protein is Na(+)/H(+) antiporter NhaA of Shigella dysenteriae serotype 1 (strain Sd197).